Here is a 538-residue protein sequence, read N- to C-terminus: Solute carrier family 2, facilitated glucose transporter member 9 (538 aa).

Residues 1–34 are Cytoplasmic-facing; the sequence is MDSRELALASLMCDTGGPGELSVGHQQRRTKKWS. Position 3 is a phosphoserine (serine 3). Residues 35 to 54 form a helical membrane-spanning segment; the sequence is FSLVVAALVGAFGSSFLYGY. N-linked (GlcNAc...) asparagine glycosylation is found at asparagine 55 and asparagine 71. The Extracellular segment spans residues 55–88; the sequence is NLSVVNAPTPYIKAFYNGTWYRRHGQPIDPDTLT. The helical transmembrane segment at 89–109 threads the bilayer; sequence LLWSVTVSIFAIGGLVGTLMV. The Cytoplasmic portion of the chain corresponds to 110–120; that stretch reads KMIGKFLGRKS. Residues 121-143 form a helical membrane-spanning segment; the sequence is TLLVNNGFAISAALLMACSLRAG. Over 144 to 148 the chain is Extracellular; sequence TFEML. Residues 149–170 traverse the membrane as a helical segment; that stretch reads IVGRFIMGVDGGIALSALPMYL. The Cytoplasmic portion of the chain corresponds to 171–181; it reads NEISPKEIRGS. Residues 182 to 200 form a helical membrane-spanning segment; it reads LGQVTAIFICIGVFSGQLL. Residues 201-211 are Extracellular-facing; sequence GLPELLGREST. A helical membrane pass occupies residues 212–233; the sequence is WPYLFGVIIVPALVQLASLPFL. At 234–297 the chain is on the cytoplasmic side; that stretch reads PESPRYLLFE…LLRAPFVRWQ (64 aa). A helical transmembrane segment spans residues 298–319; the sequence is VITVIITMASYQLCGLNAIWFY. Over 320 to 333 the chain is Extracellular; the sequence is TNSIFGKAGIPQDK. A helical transmembrane segment spans residues 334 to 356; it reads IPYITLSTGGIETLAAIFSGLVI. Residues 357-362 are Cytoplasmic-facing; sequence ERLGRR. A helical transmembrane segment spans residues 363–385; it reads PLLIGGFGLMALFFGTLTATLTL. At 386-390 the chain is on the extracellular side; the sequence is QDQAP. Residues 391-418 form a helical membrane-spanning segment; sequence WVPYLSIVCILAIIASFCSGPGGIPFIL. Over 419-429 the chain is Cytoplasmic; that stretch reads TGEFFQQSERP. A helical transmembrane segment spans residues 430-453; it reads AAFMIAGTVNWLSNFAVGLLFPFI. Residues 454 to 458 are Extracellular-facing; sequence QKSLD. The helical transmembrane segment at 459 to 480 threads the bilayer; sequence SYCFLVFATICIAGATYFYFVL. The Cytoplasmic portion of the chain corresponds to 481 to 538; the sequence is PETKNRTHAEISQAFAKRNKAQPPEVKADSAMTEEKANSQTEPDSSSTLDSYGQNKIV. A disordered region spans residues 495–538; sequence FAKRNKAQPPEVKADSAMTEEKANSQTEPDSSSTLDSYGQNKIV. Positions 518 to 538 are enriched in polar residues; it reads NSQTEPDSSSTLDSYGQNKIV.

Belongs to the major facilitator superfamily. Sugar transporter (TC 2.A.1.1) family. N-glycosylated. In terms of tissue distribution, highly expressed in the intestine, with high expression in the jejunum and ileum, the segments of the intestine that perform the majority of urate excretion. Isoform 1: Widely expressed. Isoform 1: In kidney, expressed at low levels in proximal tubules. Isoform 2: Primarily expressed in liver and kidney; with specific expression in distal convoluted and connecting tubules of kidney.

Its subcellular location is the basolateral cell membrane. It is found in the apical cell membrane. The enzyme catalyses urate(out) = urate(in). High-capacity urate transporter, which may play a role in the urate reabsorption by proximal tubules. May have a residual high-affinity, low-capacity glucose and fructose transporter activity. Transports urate at rates 45- to 60-fold faster than glucose. Does not transport galactose. May mediate small uptake of adenine but not of other nucleobases. This chain is Solute carrier family 2, facilitated glucose transporter member 9, found in Mus musculus (Mouse).